A 217-amino-acid chain; its full sequence is Peroxiredoxin (217 aa).

A Thioredoxin domain is found at 2 to 159; the sequence is PVIGEKFPEV…IVRLVKALQV (158 aa). The Cysteine sulfenic acid (-SOH) intermediate role is filled by C46. R122 contacts substrate. The cysteines at positions 206 and 212 are disulfide-linked.

The protein belongs to the peroxiredoxin family. Prx6 subfamily. As to quaternary structure, homodecamer. Pentamer of dimers that assemble into a ring structure.

Its subcellular location is the cytoplasm. The enzyme catalyses a hydroperoxide + [thioredoxin]-dithiol = an alcohol + [thioredoxin]-disulfide + H2O. Thiol-specific peroxidase that catalyzes the reduction of hydrogen peroxide and organic hydroperoxides to water and alcohols, respectively. Plays a role in cell protection against oxidative stress by detoxifying peroxides. The sequence is that of Peroxiredoxin from Methanocaldococcus jannaschii (strain ATCC 43067 / DSM 2661 / JAL-1 / JCM 10045 / NBRC 100440) (Methanococcus jannaschii).